Here is a 38-residue protein sequence, read N- to C-terminus: Mu/omega-theraphotoxin-Mb1b (38 aa).

3 cysteine pairs are disulfide-bonded: Cys7/Cys21, Cys14/Cys26, and Cys20/Cys33. Ser38 bears the Serine amide mark.

The protein belongs to the neurotoxin 10 (Hwtx-1) family. 28 (Jztx-11) subfamily. In terms of tissue distribution, expressed by the venom gland.

The protein localises to the secreted. Functionally, paralytic toxin on insects that inhibits voltage-gated sodium (Nav) and calcium (Cav) channels in P.americana (American cockroach) dorsal unpaired median (DUM) neurons, and also inhibits the B.germanica (German cockroach) Nav channel (BgNaV1). May act as a gating-modifier toxin on Nav and as a pore blocker on Cav. In vivo, reversibly paralyzes both L.cuprina (Australian sheep blowfly) and M.domestica (housefly), but does not affect larvae of H.armigera (cotton bollworms). In Monocentropus balfouri (Socotra Island blue baboon tarantula), this protein is Mu/omega-theraphotoxin-Mb1b.